The chain runs to 142 residues: Midkine (142 aa).

Residues M1–A21 form the signal peptide. 5 disulfides stabilise this stretch: C36-C60, C44-C69, C51-C73, C83-C115, and C93-C125.

Belongs to the pleiotrophin family.

The protein localises to the secreted. Functionally, secreted protein that functions as a cytokine and growth factor and mediates its signal through cell-surface proteoglycan and non-proteoglycan receptors. Binds cell-surface proteoglycan receptors via their chondroitin sulfate (CS) groups. Thereby regulates many processes like inflammatory response, cell proliferation, cell adhesion, cell growth, cell survival, tissue regeneration, cell differentiation and cell migration. Inhibits mesoderm formation and promotes neural formation during development. Plays a role in development of the neuromuscular junction (NMJ). Has antibacterial activity against both Gram-positive and Gram-negative bacteria. The polypeptide is Midkine (Xenopus tropicalis (Western clawed frog)).